The chain runs to 504 residues: MCVESDGCEIEGCSSSDEVHTLSGSMSPALKSRDLHHCRPGQKFHAALLRCRTPLVAAGILSFGNVLNYMDRYTVAGVLLDIQKQFKVGDSSAGLLQTVFICSFMVAAPIFGYLGDRFNRKIILSCGIFFWSAVTLLSSFITKEYYWLLVLSRCLVGIGESSYSSISPTIIGDLFTNNKRTVMLSVFYLAIPLGSGLGYILGSIAKDAGGHWYWALRVSPMLGLTAGTLILIFVSEPKRGSADQPGGRLKTRTSWVCDMKALAKNRSYVFSSLASAAVSFATGAFGIWIPQYLVRAQVVQKSAESCTYQPCSSRDSLIFGAITCVTGLLGVVIGAVTTRLCRQKTERADPLVCAVSMLGSAIFICLIFVVAKKSIVGAYICIFIGETLLFLNWAITADILMYVVIPTRRATAVAFQGFTSHLLGDAGSPYLIGLISDSLQESYATSEIWQFLSLGYALMLCPFVIVLGGMFFLATALFFLDDRDKAAKQVNQLARPPSTVKVTK.

Helical transmembrane passes span 48–70, 94–114, 122–142, 182–202, 214–234, 269–289, 317–337, 351–371, 375–395, 415–435, and 460–480; these read LLRC…LNYM, GLLQ…FGYL, IILS…SFIT, VMLS…YILG, WALR…LIFV, VFSS…GIWI, LIFG…GAVT, LVCA…FVVA, IVGA…NWAI, FQGF…IGLI, and LCPF…LFFL.

This sequence belongs to the major facilitator superfamily. Spinster (TC 2.A.1.49) family.

It is found in the cell membrane. Its subcellular location is the endosome membrane. The catalysed reaction is sphing-4-enine 1-phosphate(in) = sphing-4-enine 1-phosphate(out). The enzyme catalyses sphinganine 1-phosphate(in) = sphinganine 1-phosphate(out). In terms of biological role, lipid transporter that specifically mediates export of sphingosine-1-phosphate (sphing-4-enine 1-phosphate, S1P) and sphinganine-1-phosphate, which play critical roles in regulating heart development. Mediates the export of S1P from cells in the extraembryonic yolk syncytial layer (YSL), thereby regulating myocardial precursor migration. The protein is Sphingosine-1-phosphate transporter SPNS2 of Danio rerio (Zebrafish).